The primary structure comprises 275 residues: Transmembrane protein 45B (275 aa).

7 helical membrane passes run 7–27, 47–67, 94–114, 116–136, 146–166, 180–200, and 212–232; these read HALP…KYPL, IVEA…EQFV, LFFA…HVPL, VDRL…YYHV, IHSL…LEVI, LIIL…PPFG, and LMFI…IVAV. 2 positions are modified to phosphoserine: Ser270 and Ser272.

Belongs to the TMEM45 family. (Microbial infection) Interacts with sindbis virus nsP1 and nsP4; these interactions lead to viral RNA replication inhibition. In terms of assembly, (Microbial infection) Interacts with chikungunya virus nsP1 and nsP4; these interactions lead to viral RNA replication inhibition.

It is found in the endosome membrane. The protein resides in the lysosome membrane. It localises to the golgi apparatus. Its subcellular location is the trans-Golgi network membrane. Its function is as follows. Plays a role in innate immunity. Mechanistically, promotes alphaviruses RNA degradation by interacting with the viral polymerase nsP4 and the mRNA-capping enzyme nsP1 and thereby interfering with the interaction between viral RNA and nsP1. The chain is Transmembrane protein 45B (TMEM45B) from Homo sapiens (Human).